Consider the following 179-residue polypeptide: Nucleoside diphosphate kinase 6 (179 aa).

ATP contacts are provided by Lys18, Phe67, Arg95, Thr101, Arg115, and Asn125. His128 acts as the Pros-phosphohistidine intermediate in catalysis.

The protein belongs to the NDK family. Mg(2+) is required as a cofactor.

The catalysed reaction is a 2'-deoxyribonucleoside 5'-diphosphate + ATP = a 2'-deoxyribonucleoside 5'-triphosphate + ADP. It carries out the reaction a ribonucleoside 5'-diphosphate + ATP = a ribonucleoside 5'-triphosphate + ADP. Major role in the synthesis of nucleoside triphosphates other than ATP. The ATP gamma phosphate is transferred to the NDP beta phosphate via a ping-pong mechanism, using a phosphorylated active-site intermediate. The chain is Nucleoside diphosphate kinase 6 (nme6) from Xenopus tropicalis (Western clawed frog).